Reading from the N-terminus, the 218-residue chain is uncharacterized protein (218 aa).

The protein belongs to the HAD-like hydrolase superfamily.

Its subcellular location is the cytoplasm. The protein localises to the nucleus. This is an uncharacterized protein from Saccharomyces cerevisiae (strain ATCC 204508 / S288c) (Baker's yeast).